The chain runs to 89 residues: Small ribosomal subunit protein uS14 (89 aa).

Belongs to the universal ribosomal protein uS14 family. As to quaternary structure, part of the 30S ribosomal subunit. Contacts proteins S3 and S10.

In terms of biological role, binds 16S rRNA, required for the assembly of 30S particles and may also be responsible for determining the conformation of the 16S rRNA at the A site. The sequence is that of Small ribosomal subunit protein uS14 from Porphyromonas gingivalis (strain ATCC 33277 / DSM 20709 / CIP 103683 / JCM 12257 / NCTC 11834 / 2561).